The following is a 655-amino-acid chain: FYVE, RhoGEF and PH domain-containing protein 2 (655 aa).

Residues Ser-11 and Ser-48 each carry the phosphoserine modification. The interval 18-64 is disordered; that stretch reads VFENSRTPEAAPRGQRLEDVHHRPECRPPESPGPREKTNVGEAVGSE. The segment covering 32–56 has biased composition (basic and acidic residues); it reads QRLEDVHHRPECRPPESPGPREKTN. The DH domain occupies 102 to 290; the sequence is PEKKIVQELL…FSAAQHSNAA (189 aa). Positions 319 to 418 constitute a PH 1 domain; that stretch reads TLLREGPVLK…WMQAFQAAID (100 aa). Residues 458–518 form an FYVE-type zinc finger; sequence DKMVTMCMRC…VCLHCYAFLT (61 aa). Zn(2+) is bound by residues Cys-464, Cys-467, Cys-481, Cys-484, Cys-489, Cys-492, Cys-510, and Cys-513. A PH 2 domain is found at 544–641; it reads QSLMCSFLQL…WVKAMERAAS (98 aa). Phosphoserine is present on Ser-654.

Its subcellular location is the cytoplasm. It localises to the cytoskeleton. The protein resides in the nucleus. It is found in the early endosome. The protein localises to the early endosome membrane. Its subcellular location is the cell projection. It localises to the ruffle membrane. In terms of biological role, activates CDC42, a member of the Ras-like family of Rho- and Rac proteins, by exchanging bound GDP for free GTP. Activates JNK1 via CDC42 but not RAC1. Binds to phosphatidylinositol 4,5-bisphosphate, phosphatidylinositol 3,4,5-trisphosphate, phosphatidylinositol 5-monophosphate, phosphatidylinositol 4-monophosphate and phosphatidylinositol 3-monophosphate. The sequence is that of FYVE, RhoGEF and PH domain-containing protein 2 (FGD2) from Homo sapiens (Human).